A 324-amino-acid chain; its full sequence is Cuticle collagen lon-3 (324 aa).

The signal sequence occupies residues 1-30 (MSVTTATSGALIFSGASLLVSLFAAASIYS). A disordered region spans residues 119 to 324 (VENTCPTGPD…AWRRKHKRVY (206 aa)). Triple-helical region stretches follow at residues 129–152 (GEEGEQGPDGQDGVDGVPGFDGQD), 170–229 (GLPG…KGDD), and 235–294 (GRQG…SGLP). Composition is skewed to low complexity over residues 136–151 (PDGQDGVDGVPGFDGQ), 168–181 (PQGLPGPQGSQGAP), 210–223 (PTGAPGDDGAPGAS), 235–246 (GRQGQRGQPGEQ), and 261–273 (EGPPGVEGEVGVP). The segment covering 296 to 311 (KDAEYCKCPTRDDGGN) has biased composition (basic and acidic residues). Residues 314–324 (RAWRRKHKRVY) are compositionally biased toward basic residues.

Belongs to the cuticular collagen family. In terms of assembly, collagen polypeptide chains are complexed within the cuticle by disulfide bonds and other types of covalent cross-links.

Its function is as follows. Nematode cuticles are composed largely of collagen-like proteins. The cuticle functions both as an exoskeleton and as a barrier to protect the worm from its environment. Dose-dependent regulator of body length and shape. This is Cuticle collagen lon-3 (lon-3) from Caenorhabditis elegans.